The following is a 157-amino-acid chain: Small ribosomal subunit protein uS7 (157 aa).

It belongs to the universal ribosomal protein uS7 family. As to quaternary structure, part of the 30S ribosomal subunit. Contacts proteins S9 and S11.

In terms of biological role, one of the primary rRNA binding proteins, it binds directly to 16S rRNA where it nucleates assembly of the head domain of the 30S subunit. Is located at the subunit interface close to the decoding center, probably blocks exit of the E-site tRNA. The chain is Small ribosomal subunit protein uS7 from Koribacter versatilis (strain Ellin345).